The following is a 357-amino-acid chain: Mitochondrial carrier protein LEU5 (357 aa).

The next 6 membrane-spanning stretches (helical) occupy residues 31 to 47 (DYIV…GSCA), 103 to 119 (LRIF…YEQI), 136 to 153 (LVSG…TYPL), 208 to 228 (VPTV…HDLL), 269 to 285 (ISGG…AYPF), and 325 to 347 (GFFV…SFFV). Solcar repeat units lie at residues 31–122 (DYIV…IRNT), 130–231 (ESHW…LHDV), and 262–354 (LRTW…MKWN).

The protein belongs to the mitochondrial carrier (TC 2.A.29) family.

It localises to the mitochondrion inner membrane. Functionally, required for the accumulation of coenzyme A in the mitochondrial matrix. The sequence is that of Mitochondrial carrier protein LEU5 (LEU5) from Saccharomyces cerevisiae (strain ATCC 204508 / S288c) (Baker's yeast).